Consider the following 401-residue polypeptide: MKLYEYQAKTVFSEHKIPTPKSILIQKEDTNPEVKSVGFPSVVKAQVLSGGRGKRGLIQLVKNENEALYQVKRLFEIEPSMKHLLIEEAVHIDKEIYVSITVDAPSGKAILIASESGGVEIETLAVEHPELIIKEPIDLRYGLLSHQARHIAYQMNLSVNQTKQMIQILMNIYEIFKKYDAELVEINPLFATKEDTLIAGDGKIMIDDNSVFRQPRFAQTETDYSSEAAYEASLEGIPFIQFDGDIGLMCAGAGLTTTVYDLIHYEGGTVANYLEFGGPNYKKAVKAMEICLKVPSKVILIVTFGTIARADVMAEGIVEAIKKLNPDRPIVTCIRGTNEAHAVELLKEAGLTPLFDTEEAVRTAVRLAKGEKRWVFLSIEKPKCVSKASRVVKEAFGPNIW.

Residues 9 to 217 (KTVFSEHKIP…DNSVFRQPRF (209 aa)) enclose the ATP-grasp domain. 35–96 (KSVGFPSVVK…EEAVHIDKEI (62 aa)) contributes to the ATP binding site. Residues Glu-185 and Asn-187 each coordinate Mg(2+).

This sequence belongs to the succinate/malate CoA ligase beta subunit family. In terms of assembly, forms a complex with SqwL. It depends on Mg(2+) as a cofactor.

It catalyses the reaction sulfoacetate + ATP + CoA = sulfoacetyl-CoA + ADP + phosphate. Its function is as follows. Part of a variant of the sulfo-TK pathway, a D-sulfoquinovose degradation pathway that produces sulfoacetate. Hydrolyzes sulfoacetyl-coenzyme A (sulfoacetyl-CoA) to produce sulfoacetate and CoA coupled with the phosphorylation of ADP to generate ATP. Cannot use succinate, acetate or 3-hydroxypropionate, and shows only residual activities with malonate and 3-sulfopropanoate. This Acholeplasma sp protein is ADP-forming sulfoacetate-CoA ligase subunit SqwK.